The primary structure comprises 839 residues: Homeobox-leucine zipper protein HOX10 (839 aa).

Disordered regions lie at residues 1 to 24 (MAAA…SGMD) and 132 to 157 (QNTP…RDAS). Residues 24–87 (DSGKYVRYTP…NRRCRDKQRK (64 aa)) constitute a DNA-binding region (homeobox). Residues 91-134 (RLQAVNRKLTAMNKLLMEENERLQKQVSQLVHENAHMRQQLQNT) adopt a coiled-coil conformation. An START domain is found at 155–383 (DASNPSGLLS…IAQETSGEVV (229 aa)).

Belongs to the HD-ZIP homeobox family. Class III subfamily. As to expression, expressed in stems, leaf sheaths and blades and panicles.

It localises to the nucleus. Functionally, probable transcription factor. The chain is Homeobox-leucine zipper protein HOX10 (HOX10) from Oryza sativa subsp. indica (Rice).